Consider the following 864-residue polypeptide: N-alpha-acetyltransferase 16, NatA auxiliary subunit (864 aa).

TPR repeat units follow at residues 46-79 (GETL…DVKS), 80-113 (HVCW…DKDN), 148-184 (RASW…PPNK), 224-257 (LLVE…NAEN), 374-407 (LWVQ…TPTL), 409-441 (ELFY…DTAD), and 485-518 (MWFQ…FFEI). A disordered region spans residues 603–638 (QKKAKLEEERKHAERERQQKNQKKKRDEEEEEASGL). Over residues 606-621 (AKLEEERKHAERERQQ) the composition is skewed to basic and acidic residues.

Component of the N-terminal acetyltransferase A (NatA) complex composed of NAA10 and NAA16.

Auxillary subunit of the N-terminal acetyltransferase A (NatA) complex which displays alpha (N-terminal) acetyltransferase activity. This is N-alpha-acetyltransferase 16, NatA auxiliary subunit (NAA16) from Homo sapiens (Human).